The following is a 561-amino-acid chain: Liver carboxylesterase B-1 (561 aa).

Residues 1 to 18 (MCLRSLFLVSLATCVVCG) form the signal peptide. N-linked (GlcNAc...) asparagine glycosylation occurs at N79. A disulfide bridge connects residues C87 and C116. The Acyl-ester intermediate role is filled by S221. Residues C273 and C284 are joined by a disulfide bond. Residues E353 and H466 each act as charge relay system in the active site. A Prevents secretion from ER motif is present at residues 558–561 (HNEL).

Belongs to the type-B carboxylesterase/lipase family. Monomer.

Its subcellular location is the endoplasmic reticulum lumen. The catalysed reaction is a carboxylic ester + H2O = an alcohol + a carboxylate + H(+). Its function is as follows. Involved in the detoxification of xenobiotics and in the activation of ester and amide prodrugs. The protein is Liver carboxylesterase B-1 of Rattus norvegicus (Rat).